Reading from the N-terminus, the 196-residue chain is MLERIKVCFTESIQTQIAAAEALPEAISRAAMTLVQSLLNGNKILCCGNGTSAANAQHFAASMINRFETERPSLPAIALNTDNVVLTAIANDRLHDEIYAKQVRALGHAGDILLAISTRGNSRDIVKAVEAAVTRDMTIVALTGYDGGELAGLLGPQDVEIRIPSHRSARIQEMHMLTVNCLCDLIDNTLFPHQDD.

The SIS domain maps to 34 to 196 (LVQSLLNGNK…DNTLFPHQDD (163 aa)).

The protein belongs to the SIS family. DiaA subfamily. Homotetramer; dimer of dimers.

Required for the timely initiation of chromosomal replication via direct interactions with the DnaA initiator protein. The protein is DnaA initiator-associating protein DiaA of Enterobacter sp. (strain 638).